The chain runs to 224 residues: RNA-free ribonuclease P (224 aa).

It belongs to the HARP family.

The enzyme catalyses Endonucleolytic cleavage of RNA, removing 5'-extranucleotides from tRNA precursor.. Functionally, RNA-free RNase P that catalyzes the removal of the 5'-leader sequence from pre-tRNA to produce the mature 5'-terminus. The sequence is that of RNA-free ribonuclease P from Haloarcula marismortui (strain ATCC 43049 / DSM 3752 / JCM 8966 / VKM B-1809) (Halobacterium marismortui).